Consider the following 608-residue polypeptide: Aspartate--tRNA(Asp/Asn) ligase (608 aa).

Position 179 (Glu-179) interacts with L-aspartate. The aspartate stretch occupies residues 203–206 (QLFK). Arg-225 provides a ligand contact to L-aspartate. Residues 225-227 (RDE) and Gln-234 contribute to the ATP site. His-461 provides a ligand contact to L-aspartate. Glu-494 provides a ligand contact to ATP. Arg-501 is an L-aspartate binding site. 546–549 (GLDR) provides a ligand contact to ATP.

Belongs to the class-II aminoacyl-tRNA synthetase family. Type 1 subfamily. As to quaternary structure, homodimer.

It localises to the cytoplasm. The enzyme catalyses tRNA(Asx) + L-aspartate + ATP = L-aspartyl-tRNA(Asx) + AMP + diphosphate. Functionally, aspartyl-tRNA synthetase with relaxed tRNA specificity since it is able to aspartylate not only its cognate tRNA(Asp) but also tRNA(Asn). Reaction proceeds in two steps: L-aspartate is first activated by ATP to form Asp-AMP and then transferred to the acceptor end of tRNA(Asp/Asn). The chain is Aspartate--tRNA(Asp/Asn) ligase from Psychrobacter arcticus (strain DSM 17307 / VKM B-2377 / 273-4).